The primary structure comprises 1050 residues: Elongation factor 3 (1050 aa).

2 residues coordinate ADP: Val43 and His45. One copy of the HEAT 1 repeat lies at 46–83 (DVPVEFFEDLKKQIQSKDAKVSLAALDAYKHIASTNGL). Position 86 (Ser86) interacts with ADP. HEAT repeat units follow at residues 89–126 (PYVV…AITP), 127–165 (TAVK…TAKA), 169–206 (LRMP…TIDN), 208–244 (DIEK…EVTM), 245–282 (ATLS…LVED), and 288–326 (PFMD…VGAV). ADP is bound by residues Thr395, His399, and Glu400. ABC transporter domains lie at 429-646 (DEGE…YYEL) and 672-998 (VKVS…KKDD). Asn708, Glu927, Asn930, and His956 together coordinate ADP. The segment at 980–1050 (GHNWVQGQGS…DAYVSSDEEF (71 aa)) is disordered. Over residues 1013–1037 (AAKKKKKLSSAELRKKKKERMKKKK) the composition is skewed to basic residues.

This sequence belongs to the ABC transporter superfamily. ABCF family. EF3 subfamily. Monomer.

The protein localises to the cytoplasm. The catalysed reaction is ATP + H2O = ADP + phosphate + H(+). It functions in the pathway protein biosynthesis; polypeptide chain elongation. In terms of biological role, ribosome-dependent ATPase that functions in cytoplasmic translation elongation. Required for the ATP-dependent release of deacylated tRNA from the ribosomal E-site during protein biosynthesis. Stimulates the eEF1A-dependent binding of aminoacyl-tRNA to the ribosomal A-site, which has reduced affinity for tRNA as long as the E-site is occupied. Assists translation termination by stimulating the release of nascent protein from the ribosome by release factors. The protein is Elongation factor 3 (CEF3) of Candida albicans (strain SC5314 / ATCC MYA-2876) (Yeast).